The sequence spans 312 residues: Olfactory receptor 10P22 (312 aa).

At Met-1–His-26 the chain is on the extracellular side. N-linked (GlcNAc...) asparagine glycosylation occurs at Asn-5. A helical membrane pass occupies residues Leu-27–Leu-47. Over Leu-48–Ser-57 the chain is Cytoplasmic. The helical transmembrane segment at Pro-58 to Val-78 threads the bilayer. The Extracellular segment spans residues Pro-79–Cys-89. A helical transmembrane segment spans residues Pro-90–Ala-110. Over Glu-111–Gly-143 the chain is Cytoplasmic. The helical transmembrane segment at Leu-144 to Phe-164 threads the bilayer. The Extracellular portion of the chain corresponds to Thr-165–Thr-205. Residues Phe-206–Leu-226 form a helical membrane-spanning segment. At Gly-227–Lys-236 the chain is on the cytoplasmic side. A helical membrane pass occupies residues Leu-237–Val-257. Over Ala-258–Asp-271 the chain is Extracellular. A helical transmembrane segment spans residues Gln-272–Leu-292. Residues Arg-293–Pro-312 are Cytoplasmic-facing.

The protein belongs to the G-protein coupled receptor 1 family.

The protein resides in the cell membrane. Functionally, odorant receptor. In Mus musculus (Mouse), this protein is Olfactory receptor 10P22.